Reading from the N-terminus, the 332-residue chain is 2,3-diketo-L-gulonate reductase (332 aa).

The active-site Proton donor is histidine 44. Residues 168 to 174 (ITMVDMS), 224 to 225 (WK), and 304 to 306 (GHE) contribute to the NAD(+) site.

It belongs to the LDH2/MDH2 oxidoreductase family. DlgD subfamily. As to quaternary structure, homodimer.

The protein resides in the cytoplasm. It carries out the reaction 3-dehydro-L-gulonate + NAD(+) = 2,3-dioxo-L-gulonate + NADH + H(+). It catalyses the reaction 3-dehydro-L-gulonate + NADP(+) = 2,3-dioxo-L-gulonate + NADPH + H(+). Catalyzes the reduction of 2,3-diketo-L-gulonate in the presence of NADH, to form 3-keto-L-gulonate. The polypeptide is 2,3-diketo-L-gulonate reductase (Pasteurella multocida (strain Pm70)).